Reading from the N-terminus, the 309-residue chain is Acetylglutamate kinase (309 aa).

Residues 82–83 (GG), R104, and N206 contribute to the substrate site.

The protein belongs to the acetylglutamate kinase family. ArgB subfamily.

The protein localises to the cytoplasm. It carries out the reaction N-acetyl-L-glutamate + ATP = N-acetyl-L-glutamyl 5-phosphate + ADP. It participates in amino-acid biosynthesis; L-arginine biosynthesis; N(2)-acetyl-L-ornithine from L-glutamate: step 2/4. Functionally, catalyzes the ATP-dependent phosphorylation of N-acetyl-L-glutamate. The sequence is that of Acetylglutamate kinase from Cupriavidus metallidurans (strain ATCC 43123 / DSM 2839 / NBRC 102507 / CH34) (Ralstonia metallidurans).